The primary structure comprises 896 residues: Protein translocase subunit SecA (896 aa).

ATP is bound by residues glutamine 87, 105–109 (GEGKT), and aspartate 512. Disordered regions lie at residues 565-584 (RRID…PGSS) and 840-896 (EAAQ…AHEA). Positions 876, 878, 887, and 888 each coordinate Zn(2+). Basic residues predominate over residues 882–896 (KKYKHCHGNRAAHEA).

It belongs to the SecA family. Monomer and homodimer. Part of the essential Sec protein translocation apparatus which comprises SecA, SecYEG and auxiliary proteins SecDF-YajC and YidC. Zn(2+) is required as a cofactor.

It is found in the cell inner membrane. It localises to the cytoplasm. The enzyme catalyses ATP + H2O + cellular proteinSide 1 = ADP + phosphate + cellular proteinSide 2.. In terms of biological role, part of the Sec protein translocase complex. Interacts with the SecYEG preprotein conducting channel. Has a central role in coupling the hydrolysis of ATP to the transfer of proteins into and across the cell membrane, serving both as a receptor for the preprotein-SecB complex and as an ATP-driven molecular motor driving the stepwise translocation of polypeptide chains across the membrane. The polypeptide is Protein translocase subunit SecA (Mannheimia succiniciproducens (strain KCTC 0769BP / MBEL55E)).